The sequence spans 244 residues: Protein crossbronx (244 aa).

The region spanning 20–176 (QQEYKILAEY…VQKNIKESKE (157 aa)) is the UBC core domain. The interval 209-244 (AGRSKQTEPSAQQANGGHATGLSWVKEGEFKPLSIE) is disordered.

This sequence belongs to the ubiquitin-conjugating enzyme family. FTS subfamily.

In Drosophila erecta (Fruit fly), this protein is Protein crossbronx (cbx).